The chain runs to 644 residues: Cyclin-dependent kinase C-2 C (644 aa).

The region spanning 105–389 (FQKLEKIGQG…ASSALNSEYF (285 aa)) is the Protein kinase domain. ATP is bound by residues 111–119 (IGQGTYSSV) and K134. The residue at position 116 (Y116) is a Phosphotyrosine. The active-site Proton acceptor is the D229. T263 is subject to Phosphothreonine. A Nuclear localization signal motif is present at residues 420–427 (RKRANLKL). Over residues 565 to 576 (SKLSRIGERHGS) the composition is skewed to basic and acidic residues. The segment at 565–591 (SKLSRIGERHGSLDGSGLDFSQREEDS) is disordered.

This sequence belongs to the protein kinase superfamily. CMGC Ser/Thr protein kinase family. CDC2/CDKX subfamily. Post-translationally, autophosphorylated. In terms of tissue distribution, expressed specifically in flowers and pollen.

It localises to the nucleus. This chain is Cyclin-dependent kinase C-2 C, found in Arabidopsis thaliana (Mouse-ear cress).